Reading from the N-terminus, the 288-residue chain is MKKIKKAIIPAAGLGTRFLPATKAMPKEMLPILDKPTIQYIVEEAARAGIEDIIIVTGRHKRAIEDHFDSQKELEMVLKEKGKSELLEKVQYSTELANIFYVRQKEQKGLGHAISSARQFIGNEPFAVLLGDDIVESEVPAVKQLIDVYEETGHSVIGVQEVPEADTHRYGIIDPLTKNGRQYEVKKFVEKPAQGTAPSNLAIMGRYVLTPEIFDYLKTQKEGAGNEIQLTDAIERMNNDNQVYAYDFEGERYDVGEKLGFVKTTIEYALKDDSMREELTRFIKALGL.

It belongs to the UDPGP type 2 family.

It carries out the reaction alpha-D-glucose 1-phosphate + UTP + H(+) = UDP-alpha-D-glucose + diphosphate. Its pathway is glycolipid metabolism; diglucosyl-diacylglycerol biosynthesis. In terms of biological role, catalyzes the formation of UDP-glucose from glucose-1-phosphate and UTP. This is an intermediate step in the biosynthesis of diglucosyl-diacylglycerol (Glc2-DAG), i.e. the predominant glycolipid found in the S.aureus membrane, which is also used as a membrane anchor for lipoteichoic acid (LTA). This Staphylococcus aureus (strain USA300) protein is UTP--glucose-1-phosphate uridylyltransferase (gtaB).